The sequence spans 210 residues: 2-dehydro-3-deoxy-phosphogluconate aldolase (210 aa).

The Proton acceptor role is filled by E41. Residues R45, T69, and K129 each contribute to the pyruvate site. K129 acts as the Schiff-base intermediate with substrate in catalysis.

The protein belongs to the KHG/KDPG aldolase family. Homotrimer.

It is found in the cytoplasm. The enzyme catalyses 2-dehydro-3-deoxy-6-phospho-D-gluconate = D-glyceraldehyde 3-phosphate + pyruvate. It functions in the pathway carbohydrate acid metabolism; 2-dehydro-3-deoxy-D-gluconate degradation; D-glyceraldehyde 3-phosphate and pyruvate from 2-dehydro-3-deoxy-D-gluconate: step 2/2. Its function is as follows. Catalyzes the reversible, stereospecific retro-aldol cleavage of 2-keto-3-deoxy-6-phosphogluconate (KDPG) to pyruvate and D-glyceraldehyde-3-phosphate. This chain is 2-dehydro-3-deoxy-phosphogluconate aldolase (eda), found in Treponema pallidum (strain Nichols).